A 218-amino-acid chain; its full sequence is ATP phosphoribosyltransferase (218 aa).

This sequence belongs to the ATP phosphoribosyltransferase family. Short subfamily. Heteromultimer composed of HisG and HisZ subunits.

The protein localises to the cytoplasm. It catalyses the reaction 1-(5-phospho-beta-D-ribosyl)-ATP + diphosphate = 5-phospho-alpha-D-ribose 1-diphosphate + ATP. It participates in amino-acid biosynthesis; L-histidine biosynthesis; L-histidine from 5-phospho-alpha-D-ribose 1-diphosphate: step 1/9. Its function is as follows. Catalyzes the condensation of ATP and 5-phosphoribose 1-diphosphate to form N'-(5'-phosphoribosyl)-ATP (PR-ATP). Has a crucial role in the pathway because the rate of histidine biosynthesis seems to be controlled primarily by regulation of HisG enzymatic activity. This chain is ATP phosphoribosyltransferase, found in Burkholderia thailandensis (strain ATCC 700388 / DSM 13276 / CCUG 48851 / CIP 106301 / E264).